A 546-amino-acid polypeptide reads, in one-letter code: Probable protein kinase UbiB (546 aa).

In terms of domain architecture, Protein kinase spans 124–502 (DFDIQPLASA…HVRQSQSRYL (379 aa)). Residues 130–138 (LASASIAQV) and K153 contribute to the ATP site. D288 acts as the Proton acceptor in catalysis. A run of 2 helical transmembrane segments spans residues 501–521 (YLLGIGATLLLSGSFLLVNRP) and 522–542 (EWGLMPGWLMVGGVVVWLVGW).

Belongs to the ABC1 family. UbiB subfamily.

Its subcellular location is the cell inner membrane. Its pathway is cofactor biosynthesis; ubiquinone biosynthesis [regulation]. Is probably a protein kinase regulator of UbiI activity which is involved in aerobic coenzyme Q (ubiquinone) biosynthesis. This Salmonella enteritidis PT4 (strain P125109) protein is Probable protein kinase UbiB.